The chain runs to 503 residues: Probable zinc metalloprotease UREG_01421 (503 aa).

A signal peptide spans 1-24 (MHSLSSALAGSTFVLLFLCLLASA). N-linked (GlcNAc...) asparagine glycosylation occurs at N105. Residues H176, D196, and E232 each coordinate Zn(2+). An N-linked (GlcNAc...) asparagine glycan is attached at N247. Position 259 (D259) interacts with Zn(2+). Residues 416-503 (MPRNVRVSTR…RGVAVLPFPA (88 aa)) enclose the Fibronectin type-III domain. A glycan (N-linked (GlcNAc...) asparagine) is linked at N429.

Belongs to the peptidase M28 family. M28B subfamily. Requires Zn(2+) as cofactor.

It is found in the secreted. This is Probable zinc metalloprotease UREG_01421 from Uncinocarpus reesii (strain UAMH 1704).